Consider the following 298-residue polypeptide: Cyclin-dependent kinase 2 (298 aa).

At methionine 1 the chain carries N-acetylmethionine. In terms of domain architecture, Protein kinase spans 4–286 (FQKVEKIGEG…AKAALAHPFF (283 aa)). Position 6 is an N6-acetyllysine (lysine 6). 10 to 18 (IGEGTYGVV) contacts ATP. Threonine 14 is subject to Phosphothreonine. A Phosphotyrosine; by WEE1 modification is found at tyrosine 15. Phosphotyrosine is present on tyrosine 19. Residues lysine 33, 81–83 (EFL), and aspartate 86 contribute to the ATP site. The active-site Proton acceptor is aspartate 127. Residues 129 to 132 (KPQN) and aspartate 145 each bind ATP. Mg(2+)-binding residues include asparagine 132 and aspartate 145. Threonine 160 is modified (phosphothreonine; by CAK and CCRK).

Belongs to the protein kinase superfamily. CMGC Ser/Thr protein kinase family. CDC2/CDKX subfamily. As to quaternary structure, found in a complex with CABLES1, CCNA1 and CCNE1. Interacts with CABLES1. Interacts with UHRF2. Part of a complex consisting of UHRF2, CDK2 and CCNE1. Interacts with the Speedy/Ringo proteins SPDYA and SPDYC. Interaction with SPDYA promotes kinase activation via a conformation change that alleviates obstruction of the substrate-binding cleft by the T-loop. Found in a complex with both SPDYA and CDKN1B/KIP1. Binds to RB1 and CDK7. Binding to CDKN1A (p21) leads to CDK2/cyclin E inactivation at the G1-S phase DNA damage checkpoint, thereby arresting cells at the G1-S transition during DNA repair. Associated with PTPN6 and beta-catenin/CTNNB1. Interacts with CACUL1. May interact with CEP63. Interacts with ANKRD17. Interacts with CEBPA (when phosphorylated). Forms a ternary complex with CCNA2 and CDKN1B; CDKN1B inhibits the kinase activity of CDK2 through conformational rearrangements. Interacts with cyclins A, B1, B3, D, or E. Interacts with CDK2AP2. Mg(2+) serves as cofactor. Phosphorylated at Thr-160 by CDK7 in a CAK complex. Phosphorylation at Thr-160 promotes kinase activity, whereas phosphorylation at Tyr-15 by WEE1 reduces slightly kinase activity. Phosphorylated on Thr-14 and Tyr-15 during S and G2 phases before being dephosphorylated by CDC25A. In terms of processing, nitrosylated after treatment with nitric oxide (DETA-NO).

The protein localises to the cytoplasm. It is found in the cytoskeleton. Its subcellular location is the microtubule organizing center. The protein resides in the centrosome. It localises to the nucleus. The protein localises to the cajal body. It is found in the endosome. It carries out the reaction L-seryl-[protein] + ATP = O-phospho-L-seryl-[protein] + ADP + H(+). It catalyses the reaction L-threonyl-[protein] + ATP = O-phospho-L-threonyl-[protein] + ADP + H(+). With respect to regulation, phosphorylation at Thr-14 or Tyr-15 inactivates the enzyme, while phosphorylation at Thr-160 activates it. Inhibited by 1,25-dihydroxyvitamin D(3) (1,25-(OH)(2)D(3)), AG-024322, N-(4-Piperidinyl)-4-(2,6-dichlorobenzoylamino)-1H-pyrazole-3-carboxamide (AT7519), R547 (Ro-4584820), purine, pyrimidine and pyridine derivatives, 2-aminopyrimidines, paullones, thiazo derivatives, macrocyclic quinoxalin-2-one, pyrazolo[1,5-a]-1,3,5-triazine, pyrazolo[1,5-a]pyrimidine, 2-(1-ethyl-2-hydroxyethylamino)-6-benzylamino-9-isopropylpurine (roscovitine, seliciclib and CYC202), SNS-032 (BMS-387032), triazolo[1,5-a]pyrimidines, staurosporine and olomoucine. Stimulated by MYC. Inactivated by CDKN1A (p21). Functionally, serine/threonine-protein kinase involved in the control of the cell cycle; essential for meiosis, but dispensable for mitosis. Phosphorylates CABLES1, CTNNB1, CDK2AP2, ERCC6, NBN, USP37, p53/TP53, NPM1, CDK7, RB1, BRCA2, MYC, NPAT, EZH2. Triggers duplication of centrosomes and DNA. Acts at the G1-S transition to promote the E2F transcriptional program and the initiation of DNA synthesis, and modulates G2 progression; controls the timing of entry into mitosis/meiosis by controlling the subsequent activation of cyclin B/CDK1 by phosphorylation, and coordinates the activation of cyclin B/CDK1 at the centrosome and in the nucleus. Crucial role in orchestrating a fine balance between cellular proliferation, cell death, and DNA repair in embryonic stem cells (ESCs). Activity of CDK2 is maximal during S phase and G2; activated by interaction with cyclin E during the early stages of DNA synthesis to permit G1-S transition, and subsequently activated by cyclin A2 (cyclin A1 in germ cells) during the late stages of DNA replication to drive the transition from S phase to mitosis, the G2 phase. EZH2 phosphorylation promotes H3K27me3 maintenance and epigenetic gene silencing. Cyclin E/CDK2 prevents oxidative stress-mediated Ras-induced senescence by phosphorylating MYC. Involved in G1-S phase DNA damage checkpoint that prevents cells with damaged DNA from initiating mitosis; regulates homologous recombination-dependent repair by phosphorylating BRCA2, this phosphorylation is low in S phase when recombination is active, but increases as cells progress towards mitosis. In response to DNA damage, double-strand break repair by homologous recombination a reduction of CDK2-mediated BRCA2 phosphorylation. Involved in regulation of telomere repair by mediating phosphorylation of NBN. Phosphorylation of RB1 disturbs its interaction with E2F1. NPM1 phosphorylation by cyclin E/CDK2 promotes its dissociates from unduplicated centrosomes, thus initiating centrosome duplication. Cyclin E/CDK2-mediated phosphorylation of NPAT at G1-S transition and until prophase stimulates the NPAT-mediated activation of histone gene transcription during S phase. Required for vitamin D-mediated growth inhibition by being itself inactivated. Involved in the nitric oxide- (NO) mediated signaling in a nitrosylation/activation-dependent manner. USP37 is activated by phosphorylation and thus triggers G1-S transition. CTNNB1 phosphorylation regulates insulin internalization. Phosphorylates FOXP3 and negatively regulates its transcriptional activity and protein stability. Phosphorylates ERCC6 which is essential for its chromatin remodeling activity at DNA double-strand breaks. Acts as a regulator of the phosphatidylinositol 3-kinase/protein kinase B signal transduction by mediating phosphorylation of the C-terminus of protein kinase B (PKB/AKT1 and PKB/AKT2), promoting its activation. The sequence is that of Cyclin-dependent kinase 2 (CDK2) from Homo sapiens (Human).